Here is a 127-residue protein sequence, read N- to C-terminus: Large-conductance mechanosensitive channel (127 aa).

3 helical membrane-spanning segments follow: residues Glu-9–Phe-29, Ile-32–Ile-52, and Val-75–Leu-95.

This sequence belongs to the MscL family. Homopentamer.

Its subcellular location is the cell inner membrane. Channel that opens in response to stretch forces in the membrane lipid bilayer. May participate in the regulation of osmotic pressure changes within the cell. This chain is Large-conductance mechanosensitive channel, found in Legionella pneumophila subsp. pneumophila (strain Philadelphia 1 / ATCC 33152 / DSM 7513).